The chain runs to 432 residues: uncharacterized protein (432 aa).

This is an uncharacterized protein from Methanocaldococcus jannaschii (strain ATCC 43067 / DSM 2661 / JAL-1 / JCM 10045 / NBRC 100440) (Methanococcus jannaschii).